The sequence spans 303 residues: Ribosomal protein L11 methyltransferase (303 aa).

Positions 152, 173, 195, and 239 each coordinate S-adenosyl-L-methionine.

It belongs to the methyltransferase superfamily. PrmA family.

It is found in the cytoplasm. The catalysed reaction is L-lysyl-[protein] + 3 S-adenosyl-L-methionine = N(6),N(6),N(6)-trimethyl-L-lysyl-[protein] + 3 S-adenosyl-L-homocysteine + 3 H(+). Functionally, methylates ribosomal protein L11. This Desulforapulum autotrophicum (strain ATCC 43914 / DSM 3382 / VKM B-1955 / HRM2) (Desulfobacterium autotrophicum) protein is Ribosomal protein L11 methyltransferase.